The primary structure comprises 253 residues: Geranylgeranylglyceryl phosphate synthase (253 aa).

Mg(2+) is bound by residues aspartate 23 and serine 52. Residues 171–177 (YFEAGSG), 202–203 (GG), and 224–225 (GT) each bind sn-glycerol 1-phosphate.

Belongs to the GGGP/HepGP synthase family. Group II subfamily. Homodimer. It depends on Mg(2+) as a cofactor.

The protein localises to the cytoplasm. It catalyses the reaction sn-glycerol 1-phosphate + (2E,6E,10E)-geranylgeranyl diphosphate = sn-3-O-(geranylgeranyl)glycerol 1-phosphate + diphosphate. It functions in the pathway membrane lipid metabolism; glycerophospholipid metabolism. Its activity is regulated as follows. Inhibited by high concentrations of magnesium (&gt;10 mM) and by EDTA in vitro. Prenyltransferase that catalyzes the transfer of the geranylgeranyl moiety of geranylgeranyl diphosphate (GGPP) to the C3 hydroxyl of sn-glycerol-1-phosphate (G1P). This reaction is the first ether-bond-formation step in the biosynthesis of archaeal membrane lipids. Cannot use sn-glycerol-3-phosphate (G3P) as substrate. This is Geranylgeranylglyceryl phosphate synthase from Thermoplasma acidophilum (strain ATCC 25905 / DSM 1728 / JCM 9062 / NBRC 15155 / AMRC-C165).